The primary structure comprises 543 residues: MESQRSFLLIGLAMVSFLLWQQWQVDYGPQPAQPVESQQTTGSDAPNSNGDVPIATPTNKSALPTQSVVGKVISVTTDTLQLSINTVGGDVISANLLKYPLEQGSQGTYSLLRPSGPTIFVAQSGLVGTNGIDKGSRPTYSVSQDSFVMEGDSLTVPLTYTAKSGLLVTKEFIFSKNSHEVKVNYHVENTSSDVKSVKQFGQLKQSTADQGGSMFMPTYRGGAFSTEDERYEKYSFDDMQDKNLNQVTPAGWTAMIEHYFVSAWVPPQDQTNSLYSKMTQNGNAIIGFIGQSVDIEPGQSVDIQSSLYLGPKDQDTLEKIARGLDLTVDYGFLWWISKYLFAFLQFIHSLIGNWGFSIILITIVVKGAMYPLTKAQYESMAKMRALKPKMDALKERYGDDKQKMQQAMMEMYKKDKVNPMGGCFPLLLQMPIFLALYWVLLESVELRHANFIFWITDLSVKDPYFVLPILTGLSMYLLQKLQPMTMTDPMQQKIMQFMPVAMSLFFFIFPAGLVLYWLISNIITLIQAKIIYASMEKRGLKTK.

A helical membrane pass occupies residues 7 to 27 (FLLIGLAMVSFLLWQQWQVDY). A disordered region spans residues 30–61 (QPAQPVESQQTTGSDAPNSNGDVPIATPTNKS). Residues 35–61 (VESQQTTGSDAPNSNGDVPIATPTNKS) show a composition bias toward polar residues. 4 helical membrane passes run 341-361 (FAFL…IILI), 421-441 (GGCF…WVLL), 451-471 (FIFW…PILT), and 499-519 (PVAM…YWLI).

The protein belongs to the OXA1/ALB3/YidC family. Type 1 subfamily. Interacts with the Sec translocase complex via SecD. Specifically interacts with transmembrane segments of nascent integral membrane proteins during membrane integration.

Its subcellular location is the cell inner membrane. Functionally, required for the insertion and/or proper folding and/or complex formation of integral membrane proteins into the membrane. Involved in integration of membrane proteins that insert both dependently and independently of the Sec translocase complex, as well as at least some lipoproteins. Aids folding of multispanning membrane proteins. The protein is Membrane protein insertase YidC of Pseudoalteromonas atlantica (strain T6c / ATCC BAA-1087).